Here is a 144-residue protein sequence, read N- to C-terminus: Large ribosomal subunit protein uL13 (144 aa).

This sequence belongs to the universal ribosomal protein uL13 family. As to quaternary structure, part of the 50S ribosomal subunit.

In terms of biological role, this protein is one of the early assembly proteins of the 50S ribosomal subunit, although it is not seen to bind rRNA by itself. It is important during the early stages of 50S assembly. In Nitratidesulfovibrio vulgaris (strain ATCC 29579 / DSM 644 / CCUG 34227 / NCIMB 8303 / VKM B-1760 / Hildenborough) (Desulfovibrio vulgaris), this protein is Large ribosomal subunit protein uL13.